The chain runs to 543 residues: Cobyric acid synthase (543 aa).

Positions 260 to 483 constitute a GATase cobBQ-type domain; sequence MLDIVLVDLP…LHGVFDADGF (224 aa). The Nucleophile role is filled by cysteine 346. Histidine 475 is a catalytic residue.

It belongs to the CobB/CobQ family. CobQ subfamily.

Its pathway is cofactor biosynthesis; adenosylcobalamin biosynthesis. Catalyzes amidations at positions B, D, E, and G on adenosylcobyrinic A,C-diamide. NH(2) groups are provided by glutamine, and one molecule of ATP is hydrogenolyzed for each amidation. This is Cobyric acid synthase from Nitratidesulfovibrio vulgaris (strain ATCC 29579 / DSM 644 / CCUG 34227 / NCIMB 8303 / VKM B-1760 / Hildenborough) (Desulfovibrio vulgaris).